Consider the following 795-residue polypeptide: Protocadherin beta-5 (795 aa).

Positions 1–30 (METALAKTPQKRQVMFLAILLLLWEAGSEA) are cleaved as a signal peptide. The Extracellular segment spans residues 31-689 (VRYSIPEETE…AQADSLTVYL (659 aa)). Cadherin domains lie at 35 to 133 (IPEE…SPEF), 138 to 242 (MLLK…APEF), 247 to 346 (YEVQ…APEL), 351 to 450 (LSSP…APAF), and 455 to 560 (YTLF…SPFV). Asn169 is a glycosylation site (N-linked (GlcNAc...) asparagine). Position 296 is an N6-acetyllysine (Lys296). 2 N-linked (GlcNAc...) asparagine glycosylation sites follow: Asn417 and Asn435. N-linked (GlcNAc...) asparagine glycosylation is present at Asn566. A Cadherin 6 domain is found at 567-670 (GSAPCTELVP…LVDGFSQPYL (104 aa)). Residues 690–710 (VVALASVSSLFLFSVLLFVAV) traverse the membrane as a helical segment. The Cytoplasmic portion of the chain corresponds to 711–795 (RLCRRSRAAP…AAFRNSFGLN (85 aa)).

It localises to the cell membrane. Functionally, potential calcium-dependent cell-adhesion protein. May be involved in the establishment and maintenance of specific neuronal connections in the brain. The polypeptide is Protocadherin beta-5 (PCDHB5) (Pan troglodytes (Chimpanzee)).